The primary structure comprises 367 residues: MGSNSFGRLFTVTTFGESHGPAIGCIIDGCPPGLEIAPEEFTHDLQRRATGKSRHTSARREADEIEILSGVYEGRTTGTPIGLLIRNTDQRSKDYTNIAQQFRPGHADYTYWQKYGIRDPRGGGRSSARETTMRVAAGVIAKKWLKQRYGVLVRGFLSQLGEIRPTGFDWDAVEDNPFFWPHAAQVPELETYMDALRKSGDSVGARVDVVAGGVPPGWGEPIYGKLDSELAAALMSINAVKGVEIGDGFASAAQKGTEHRDLITPEGFLSNHAGGILGGISTGQAVTASMVLKPTSSLRLPGATVDADGAVVDVITTGRHDPCVGIRATPIAEAMMALVLMDQALRHRAQCGDVGEVSPLIPGQADV.

The NADP(+) site is built by Arg48 and Arg54. Residues 125-127, 238-239, Gly278, 293-297, and Arg319 contribute to the FMN site; these read RSS, NA, and KPTSS.

This sequence belongs to the chorismate synthase family. As to quaternary structure, homotetramer. Requires FMNH2 as cofactor.

It catalyses the reaction 5-O-(1-carboxyvinyl)-3-phosphoshikimate = chorismate + phosphate. It functions in the pathway metabolic intermediate biosynthesis; chorismate biosynthesis; chorismate from D-erythrose 4-phosphate and phosphoenolpyruvate: step 7/7. Its function is as follows. Catalyzes the anti-1,4-elimination of the C-3 phosphate and the C-6 proR hydrogen from 5-enolpyruvylshikimate-3-phosphate (EPSP) to yield chorismate, which is the branch point compound that serves as the starting substrate for the three terminal pathways of aromatic amino acid biosynthesis. This reaction introduces a second double bond into the aromatic ring system. This is Chorismate synthase from Xanthomonas campestris pv. campestris (strain B100).